A 1339-amino-acid polypeptide reads, in one-letter code: DNA polymerase alpha catalytic subunit (1339 aa).

Disordered stretches follow at residues 1–29 (MEDW…SEEE) and 60–89 (AKRR…HQQK). The span at 8–19 (RSEEQKRCEEKG) shows a compositional bias: basic and acidic residues. The Zn(2+) site is built by C1179, C1182, C1215, C1218, C1235, C1244, C1274, and C1289. The CysA-type zinc finger occupies 1179–1218 (CTHCQLVVPVDPHKYINDMFSSREKPPPTAPFELYVCFNC). Residues 1244 to 1274 (CSGGNVASVRALRAQFTYLRAMFDVPQALNC) carry the CysB motif motif.

Belongs to the DNA polymerase type-B family.

It is found in the nucleus. The catalysed reaction is DNA(n) + a 2'-deoxyribonucleoside 5'-triphosphate = DNA(n+1) + diphosphate. Functionally, polymerase alpha in a complex with DNA primase is a replicative polymerase. The sequence is that of DNA polymerase alpha catalytic subunit from Trypanosoma brucei brucei.